Reading from the N-terminus, the 109-residue chain is MKLVTSITVLLSLGIMGDAKTTQPNSMESNEEEPVHLPCNHSTISGTDYIHWYRQLPSQGPEYVIHGLTSNVNNRMASLAIAEDRKSSTLILHRATLRDAAVYYCILRD.

The N-terminal stretch at 1–19 (MKLVTSITVLLSLGIMGDA) is a signal peptide. The Ig-like domain occupies 20–109 (KTTQPNSMES…AAVYYCILRD (90 aa)). A disulfide bond links Cys-39 and Cys-105. N-linked (GlcNAc...) asparagine glycosylation occurs at Asn-40.

In terms of assembly, alpha-beta TR is a heterodimer composed of an alpha and beta chain; disulfide-linked. The alpha-beta TR is associated with the transmembrane signaling CD3 coreceptor proteins to form the TR-CD3 (TcR or TCR). The assembly of alpha-beta TR heterodimers with CD3 occurs in the endoplasmic reticulum where a single alpha-beta TR heterodimer associates with one CD3D-CD3E heterodimer, one CD3G-CD3E heterodimer and one CD247 homodimer forming a stable octameric structure. CD3D-CD3E and CD3G-CD3E heterodimers preferentially associate with TR alpha and TR beta chains, respectively. The association of the CD247 homodimer is the last step of TcR assembly in the endoplasmic reticulum and is required for transport to the cell surface.

The protein localises to the cell membrane. V region of the variable domain of T cell receptor (TR) alpha chain that participates in the antigen recognition. Alpha-beta T cell receptors are antigen specific receptors which are essential to the immune response and are present on the cell surface of T lymphocytes. Recognize peptide-major histocompatibility (MH) (pMH) complexes that are displayed by antigen presenting cells (APC), a prerequisite for efficient T cell adaptive immunity against pathogens. Binding of alpha-beta TR to pMH complex initiates TR-CD3 clustering on the cell surface and intracellular activation of LCK that phosphorylates the ITAM motifs of CD3G, CD3D, CD3E and CD247 enabling the recruitment of ZAP70. In turn ZAP70 phosphorylates LAT, which recruits numerous signaling molecules to form the LAT signalosome. The LAT signalosome propagates signal branching to three major signaling pathways, the calcium, the mitogen-activated protein kinase (MAPK) kinase and the nuclear factor NF-kappa-B (NF-kB) pathways, leading to the mobilization of transcription factors that are critical for gene expression and essential for T cell growth and differentiation. The T cell repertoire is generated in the thymus, by V-(D)-J rearrangement. This repertoire is then shaped by intrathymic selection events to generate a peripheral T cell pool of self-MH restricted, non-autoaggressive T cells. Post-thymic interaction of alpha-beta TR with the pMH complexes shapes TR structural and functional avidity. This chain is T cell receptor alpha variable 26-2, found in Homo sapiens (Human).